The following is a 1495-amino-acid chain: Pregnancy zone protein (1495 aa).

Positions 1-24 (MRRNQLPTPAFLLLFLLLPRDATT) are cleaved as a signal peptide. Residues C48 and C86 are joined by a disulfide bond. 2 N-linked (GlcNAc...) asparagine glycosylation sites follow: N55 and N157. Cystine bridges form between C249-C298 and C267-C286. N-linked (GlcNAc...) asparagine glycans are attached at residues N382, N405, and N412. An intrachain disulfide couples C469 to C562. N568 carries an N-linked (GlcNAc...) asparagine glycan. 6 disulfide bridges follow: C594–C783, C642–C689, C833–C861, C859–C895, C933–C1339, and C1092–C1140. A bait region region spans residues 686 to 744 (PRFCQEFQHYPAMGGVAPQALAVAASGPGSSFRAMGVPMMGLDYSDEINQVVEVRETVR). Residues N881 and N942 are each glycosylated (N-linked (GlcNAc...) asparagine). The isoglutamyl cysteine thioester (Cys-Gln) cross-link spans 984–987 (CGEQ). N1003 carries an N-linked (GlcNAc...) asparagine glycan. N1385 and N1443 each carry an N-linked (GlcNAc...) asparagine glycan.

This sequence belongs to the protease inhibitor I39 (alpha-2-macroglobulin) family. Highest expression in liver, medium expression in ovary, heart and stomach. Low expression in lung, kidney and uterus. Protein found in plasma.

The protein resides in the secreted. Its function is as follows. Is able to inhibit all four classes of proteinases by a unique 'trapping' mechanism. This protein has a peptide stretch, called the 'bait region' which contains specific cleavage sites for different proteinases. When a proteinase cleaves the bait region, a conformational change is induced in the protein which traps the proteinase. The entrapped enzyme remains active against low molecular weight substrates (activity against high molecular weight substrates is greatly reduced). Following cleavage in the bait region, a thioester bond is hydrolyzed and mediates the covalent binding of the protein to the proteinase. The chain is Pregnancy zone protein (Pzp) from Mus musculus (Mouse).